A 101-amino-acid chain; its full sequence is Small ribosomal subunit protein bS18c (101 aa).

The span at 1–19 (MDKSKRPFRKSKRSFRRRL) shows a compositional bias: basic residues. The disordered stretch occupies residues 1 to 23 (MDKSKRPFRKSKRSFRRRLPPIG).

This sequence belongs to the bacterial ribosomal protein bS18 family. Part of the 30S ribosomal subunit.

It is found in the plastid. The protein resides in the chloroplast. The protein is Small ribosomal subunit protein bS18c of Ceratophyllum demersum (Rigid hornwort).